Consider the following 3425-residue polypeptide: Genome polyprotein (3425 aa).

The segment at 3–16 (NKKPGRPGSGRVVN) is interaction with host EXOC1. The interval 38–73 (VLRGAGPIRFVLALLTFFKFTALRPTIGMLKRWKLV) is hydrophobic; homodimerization of capsid protein C. A propeptide spans 105–120 (GGSCSWIIMLLPIVAG) (ER anchor for the capsid protein C, removed in mature form by serine protease NS3). The helical transmembrane segment at 105 to 125 (GGSCSWIIMLLPIVAGLKLGN) threads the bilayer. N-linked (GlcNAc...) asparagine; by host glycosylation occurs at asparagine 135. 2 helical membrane passes run 247-267 (WALR…NLGT) and 273-293 (IIFT…CLGM). 6 disulfide bridges follow: cysteine 290/cysteine 317, cysteine 347/cysteine 403, cysteine 361/cysteine 392, cysteine 379/cysteine 408, cysteine 477/cysteine 575, and cysteine 592/cysteine 623. The fusion peptide stretch occupies residues 385 to 398 (DRGWGNGCGLFGKG). Helical transmembrane passes span 740-760 (LFGG…LWMG) and 768-788 (ISMT…NVNA). A disulfide bond links cysteine 792 and cysteine 803. Residues asparagine 918, asparagine 963, and asparagine 995 are each glycosylated (N-linked (GlcNAc...) asparagine; by host). 4 cysteine pairs are disulfide-bonded: cysteine 967–cysteine 1011, cysteine 1068–cysteine 1117, cysteine 1079–cysteine 1100, and cysteine 1101–cysteine 1104. 7 consecutive transmembrane segments (helical) span residues 1138-1158 (VMAF…VMIV), 1169-1189 (TAPI…FGGI), 1214-1234 (IVHL…IGFL), 1290-1310 (FALP…IDVV), 1337-1357 (MLLG…FAGL), 1369-1389 (WPVS…GGIA), and 1395-1415 (SMAI…VTGF). Residues 1421-1460 (LEKASDISWSEEARVTGASQRFDVEIDQDGNMRLLNDPGV) are interacts with and activates NS3 protease. Residues 1499–1676 (GGVIWDVPAP…EKKEEEVPQV (178 aa)) form the Peptidase S7 domain. Residues histidine 1549, aspartate 1573, and serine 1633 each act as charge relay system; for serine protease NS3 activity in the active site. Positions 1679-1835 (ENMLRKRQLT…DSNSPITDIE (157 aa)) constitute a Helicase ATP-binding domain. Residues 1683–1686 (RKRQ) form an important for RNA-binding region. 1692–1699 (LHPGSGKT) is a binding site for ATP. Residues 1783–1786 (DEAH) carry the DEAH box motif. Positions 1845–2011 (SGYEWITDFQ…GLVAQLYGPE (167 aa)) constitute a Helicase C-terminal domain. The segment at 2162–2166 (EELPE) is regulates the ATPase activity of NS3 helicase. 8 helical membrane passes run 2169–2189 (ETFL…LFFV), 2194–2214 (LGKT…LWIA), 2216–2236 (VPAQ…IVLI), 2252–2272 (VFMI…MGWL), 2306–2326 (AWAA…HLII), 2334–2354 (LMAM…MPFV), 2371–2391 (FTMT…AFLV), and 2441–2461 (CVLV…LTLT). One can recognise an mRNA cap 0-1 NS5-type MT domain in the interval 2521–2786 (GGGTGRTLGE…DVDLGSGTRA (266 aa)). Serine 2576 provides a ligand contact to S-adenosyl-L-methionine. Serine 2576 carries the phosphoserine modification. The For 2'-O-MTase activity role is filled by lysine 2581. S-adenosyl-L-methionine contacts are provided by glycine 2606, tryptophan 2607, threonine 2624, lysine 2625, and valine 2652. The active-site For 2'-O-MTase activity is aspartate 2666. Residue isoleucine 2667 coordinates S-adenosyl-L-methionine. Residues lysine 2702 and glutamate 2738 each act as for 2'-O-MTase activity in the active site. Tyrosine 2740 serves as a coordination point for S-adenosyl-L-methionine. Zn(2+) is bound by residues glutamate 2960, histidine 2964, cysteine 2969, and cysteine 2972. The RdRp catalytic domain occupies 3050–3202 (GLMYADDTAG…KPADDRFATA (153 aa)). Zn(2+) contacts are provided by histidine 3237, cysteine 3253, and cysteine 3372. A PDZ-binding motif is present at residues 3423–3425 (GVL).

This sequence in the N-terminal section; belongs to the class I-like SAM-binding methyltransferase superfamily. mRNA cap 0-1 NS5-type methyltransferase family. Homodimer. In terms of assembly, forms heterodimers with envelope protein E in the endoplasmic reticulum and Golgi. As to quaternary structure, homodimer; in the endoplasmic reticulum and Golgi. Interacts with protein prM. Interacts with non-structural protein 1. Homodimer; Homohexamer when secreted. Interacts with envelope protein E. NS1 interacts with NS4B. Interacts with host MAVS (via C-terminus); this interaction blocks the interaction of MAVS with RIGI or IFIH1/MDA5. In terms of assembly, interacts (via N-terminus) with serine protease NS3. As to quaternary structure, forms a heterodimer with serine protease NS3. May form homooligomers. Forms a heterodimer with NS2B. Interacts with non-structural protein 2A (via N-terminus). Interacts with NS4B. Interacts with unphosphorylated RNA-directed RNA polymerase NS5; this interaction stimulates RNA-directed RNA polymerase NS5 guanylyltransferase activity. In terms of assembly, interacts with serine protease NS3. As to quaternary structure, homodimer. Post-translationally, specific enzymatic cleavages in vivo yield mature proteins. Cleavages in the lumen of endoplasmic reticulum are performed by host signal peptidase, whereas cleavages in the cytoplasmic side are performed by serine protease NS3. Signal cleavage at the 2K-4B site requires a prior NS3 protease-mediated cleavage at the 4A-2K site. Both NS2A and NS2B proteins are required in cis for NS2A/2B proteolytic processing. Cleaved in post-Golgi vesicles by a host furin, releasing the mature small envelope protein M, and peptide pr. This cleavage is incomplete as up to 30% of viral particles still carry uncleaved prM. In terms of processing, N-glycosylated. Post-translationally, N-glycosylated. The excreted form is glycosylated and this is required for efficient secretion of the protein from infected cells. Phosphorylated on serines residues. This phosphorylation may trigger NS5 nuclear localization.

It is found in the virion. The protein localises to the host nucleus. It localises to the host cytoplasm. The protein resides in the host perinuclear region. Its subcellular location is the secreted. It is found in the virion membrane. The protein localises to the host endoplasmic reticulum membrane. The catalysed reaction is Selective hydrolysis of -Xaa-Xaa-|-Yaa- bonds in which each of the Xaa can be either Arg or Lys and Yaa can be either Ser or Ala.. It carries out the reaction RNA(n) + a ribonucleoside 5'-triphosphate = RNA(n+1) + diphosphate. The enzyme catalyses a ribonucleoside 5'-triphosphate + H2O = a ribonucleoside 5'-diphosphate + phosphate + H(+). It catalyses the reaction ATP + H2O = ADP + phosphate + H(+). The catalysed reaction is a 5'-end (5'-triphosphoguanosine)-ribonucleoside in mRNA + S-adenosyl-L-methionine = a 5'-end (N(7)-methyl 5'-triphosphoguanosine)-ribonucleoside in mRNA + S-adenosyl-L-homocysteine. It carries out the reaction a 5'-end (N(7)-methyl 5'-triphosphoguanosine)-ribonucleoside in mRNA + S-adenosyl-L-methionine = a 5'-end (N(7)-methyl 5'-triphosphoguanosine)-(2'-O-methyl-ribonucleoside) in mRNA + S-adenosyl-L-homocysteine + H(+). In terms of biological role, capsid protein self-assembles to form an icosahedral capsid about 40 nm in diameter. Plays a role in virus budding by binding to the cell membrane and gathering the viral RNA into a nucleocapsid that forms the core of a mature virus particle. Functionally, prevents premature fusion activity of envelope proteins in trans-Golgi by binding to envelope protein E at pH6.0. After virion release in extracellular space, gets dissociated from E dimers. Acts as a chaperone for envelope protein E during intracellular virion assembly by masking and inactivating envelope protein E fusion peptide. prM is the only viral peptide matured by host furin in the trans-Golgi network probably to avoid catastrophic activation of the viral fusion activity in acidic Golgi compartment prior to virion release. prM-E cleavage is inefficient, and many virions are only partially matured. These uncleaved prM would play a role in immune evasion. Its function is as follows. May play a role in virus budding. Exerts cytotoxic effects by activating a mitochondrial apoptotic pathway through M ectodomain. May display a viroporin activity. In terms of biological role, binds to host cell surface receptor and mediates fusion between viral and cellular membranes. Envelope protein is synthesized in the endoplasmic reticulum in the form of heterodimer with protein prM. They play a role in virion budding in the ER, and the newly formed immature particle is covered with 60 spikes composed of heterodimer between precursor prM and envelope protein E. The virion is transported to the Golgi apparatus where the low pH causes dissociation of PrM-E heterodimers and formation of E homodimers. Functionally, involved in immune evasion, pathogenesis and viral replication. Interacts with host MAVS and blocks MAVS binding to RIGI or IFIH1/MDA5, thereby leading to evasion of the innate immune response. Once cleaved off the polyprotein, is targeted to three destinations: the viral replication cycle, the plasma membrane and the extracellular compartment. Essential for viral replication. Required for formation of the replication complex and recruitment of other non-structural proteins to the ER-derived membrane structures. Excreted as a hexameric lipoparticle that plays a role against host immune response. Component of the viral RNA replication complex that functions in virion assembly. Its function is as follows. Required cofactor for the serine protease function of NS3. May have membrane-destabilizing activity and form viroporins. In terms of biological role, displays three enzymatic activities: serine protease, NTPase and RNA helicase. NS3 serine protease, in association with NS2B, performs its autocleavage and cleaves the polyprotein at dibasic sites in the cytoplasm: C-prM, NS2A-NS2B, NS2B-NS3, NS3-NS4A, NS4A-2K and NS4B-NS5. NS3 RNA helicase binds RNA and unwinds dsRNA in the 3' to 5' direction. Functionally, regulates the ATPase activity of the NS3 helicase activity. NS4A allows NS3 helicase to conserve energy during unwinding. Functions as a signal peptide for NS4B. Its function is as follows. Induces the formation of ER-derived membrane vesicles where the viral replication takes place. In terms of biological role, replicates the viral (+) and (-) RNA genome, and performs the capping of genomes in the cytoplasm. NS5 methylates viral RNA cap at guanine N-7 and ribose 2'-O positions. The sequence is that of Genome polyprotein from Anas (ducks).